The primary structure comprises 2121 residues: PAM2 domain-containing protein UPA2 (2121 aa).

Residues 1–17 carry the PAM2 1 motif; that stretch reads MEGSSLNVAAPVFKPSG. Disordered stretches follow at residues 14 to 46, 262 to 302, 375 to 397, 475 to 507, 522 to 543, and 586 to 819; these read KPSGAANSFTPAPSQPAPPTLLSSSGPDAAVHA, QPED…SALT, AATTDHEPRSPLAHQGIPLPPST, ARRRGDSSDLNLRPSLKTTHNHTMSLGLPSSGG, ANSDEGPSKPPSEAQDLPQKPL, and DLGR…QFSR. Positions 339–599 are effector domain; sequence PWPYSLGLPD…GFGYEPQSPN (261 aa). Positions 596–607 are enriched in polar residues; sequence QSPNAAPNGTTS. Acidic residues-rich tracts occupy residues 626-637 and 646-658; these read EENDELGFDGEE and EDADASDFEEEPN. The segment covering 679–689 has biased composition (basic and acidic residues); that stretch reads DGHDRYADDNQ. A compositionally biased stretch (polar residues) spans 690–712; that stretch reads SHASNDDSLQDSLTPSDEQFSNP. Residues 719-735 are compositionally biased toward basic and acidic residues; sequence REERILRRQHRAAERAA. Positions 736-745 are enriched in basic residues; sequence RRERKQRQRG. Polar residues-rich tracts occupy residues 749-758 and 777-788; these read SDNTLPSSSI and NPRNGNTISNPS. Short sequence motifs (PAM2) lie at residues 858 to 874 and 920 to 937; these read SGISLLNPDAKEFKFGG and TNAAHLNVGAAPFTPGLF. The span at 950-960 shows a compositional bias: polar residues; that stretch reads NSLSASPSIAV. Residues 950 to 1012 form a disordered region; that stretch reads NSLSASPSIA…PSPPRPKASA (63 aa). Over residues 966–981 the composition is skewed to basic and acidic residues; the sequence is GADHRETENRDMQGRE. A PAM2 4 motif is present at residues 1046–1063; that stretch reads SHESRLTADAPSFVPTWA. 3 disordered regions span residues 1076–1096, 1119–1261, and 1337–1369; these read KRPSLPDWDQQGQQAVDKDLP, SKDD…EEES, and SHARRASDETQSTIRPLRQRNSSSDVKTANSSL. Residues 1198-1207 show a composition bias toward polar residues; it reads HSPSISQTSD. Positions 1248-1261 are enriched in acidic residues; it reads GGNDEDDYEDEEES. Residues 1345–1369 are compositionally biased toward polar residues; it reads ETQSTIRPLRQRNSSSDVKTANSSL. Residues 1783 to 2054 are a coiled coil; that stretch reads LEKQAQANAD…EAKLQTLTAS (272 aa). The segment at 2099-2121 is disordered; it reads SFASTAGSQGKKEVEVDEGGWWS. Residues 2118-2120 carry the GWW motif; that stretch reads GWW.

It belongs to the UPA1 PAM2 domain-binding protein family. In terms of assembly, might form homodimers via its C-terminal coiled-coil domain. Part of large ribonucleoprotein complexes (mRNPs) containing RNA-binding proteins RRM4 and PAB1, endosome-binding protein UPA1, core scaffold protein UPA2 and associated factor GRP1. Interacts (via PAM2 motifs) with PAB1.

It is found in the cytoplasm. Its subcellular location is the cytoskeleton. The protein localises to the endosome. In terms of biological role, core component of endosomal mRNA transport and appears to carry out crucial scaffolding functions. The endosomal mRNA transport regulates polarity of the infectious hyphae by transporting a broad spectrum of cargo mRNAs from the nucleus to cell poles. This is PAM2 domain-containing protein UPA2 from Mycosarcoma maydis (Corn smut fungus).